The following is a 740-amino-acid chain: mRNA 3'-end-processing protein RNA14 (740 aa).

6 HAT repeats span residues 48 to 78, 80 to 114, 121 to 156, 167 to 200, 236 to 268, and 278 to 310; these read DKEE…YQLN, GEFQ…RTND, KARG…FLKA, QKTD…WENE, RREV…LERE, and SVQQ…FWLR. Residues 381–418 form a disordered region; sequence NRELNNKKQEENTGEENNNENDDSDNDDNDDDDSFKNP. Over residues 392 to 413 the composition is skewed to acidic residues; sequence NTGEENNNENDDSDNDDNDDDD. The stretch at 494-526 is one HAT 7 repeat; that stretch reads DNLKTASKIFELGMKHFKKQGEFLLAYLDFLIM. The segment at 668–688 is disordered; that stretch reads EFTPEVSNNNNQHTNNKDAVQ. The span at 672-688 shows a compositional bias: polar residues; that stretch reads EVSNNNNQHTNNKDAVQ.

It localises to the nucleus. Its subcellular location is the cytoplasm. Functionally, component of the cleavage factor IA (CFIA) complex, which is involved in the endonucleolytic cleavage during polyadenylation-dependent pre-mRNA 3'-end formation. This is mRNA 3'-end-processing protein RNA14 (RNA14) from Debaryomyces hansenii (strain ATCC 36239 / CBS 767 / BCRC 21394 / JCM 1990 / NBRC 0083 / IGC 2968) (Yeast).